The sequence spans 198 residues: Copy number protein (198 aa).

The protein resides in the cell membrane. Its function is as follows. Involved in copy number control of pIP404. This basic and hydrophobic protein may exert its effect from the cytoplasmic membrane. The chain is Copy number protein (cop) from Clostridium perfringens.